Here is a 351-residue protein sequence, read N- to C-terminus: Protein RecA (351 aa).

67 to 74 (GPESSGKT) serves as a coordination point for ATP.

It belongs to the RecA family.

The protein resides in the cytoplasm. Functionally, can catalyze the hydrolysis of ATP in the presence of single-stranded DNA, the ATP-dependent uptake of single-stranded DNA by duplex DNA, and the ATP-dependent hybridization of homologous single-stranded DNAs. It interacts with LexA causing its activation and leading to its autocatalytic cleavage. The polypeptide is Protein RecA (Arthrobacter sp. (strain FB24)).